Consider the following 500-residue polypeptide: Aspartyl/glutamyl-tRNA(Asn/Gln) amidotransferase subunit B (500 aa).

It belongs to the GatB/GatE family. GatB subfamily. Heterotrimer of A, B and C subunits.

It catalyses the reaction L-glutamyl-tRNA(Gln) + L-glutamine + ATP + H2O = L-glutaminyl-tRNA(Gln) + L-glutamate + ADP + phosphate + H(+). The catalysed reaction is L-aspartyl-tRNA(Asn) + L-glutamine + ATP + H2O = L-asparaginyl-tRNA(Asn) + L-glutamate + ADP + phosphate + 2 H(+). Functionally, allows the formation of correctly charged Asn-tRNA(Asn) or Gln-tRNA(Gln) through the transamidation of misacylated Asp-tRNA(Asn) or Glu-tRNA(Gln) in organisms which lack either or both of asparaginyl-tRNA or glutaminyl-tRNA synthetases. The reaction takes place in the presence of glutamine and ATP through an activated phospho-Asp-tRNA(Asn) or phospho-Glu-tRNA(Gln). The sequence is that of Aspartyl/glutamyl-tRNA(Asn/Gln) amidotransferase subunit B from Brucella anthropi (strain ATCC 49188 / DSM 6882 / CCUG 24695 / JCM 21032 / LMG 3331 / NBRC 15819 / NCTC 12168 / Alc 37) (Ochrobactrum anthropi).